Reading from the N-terminus, the 283-residue chain is Heavy metal-associated isoprenylated plant protein 3 (283 aa).

The span at 1–22 (MGEKKNEGDNKKKGGDNKKKNE) shows a compositional bias: basic and acidic residues. The disordered stretch occupies residues 1 to 26 (MGEKKNEGDNKKKGGDNKKKNETPSI). 2 consecutive HMA domains span residues 25–88 (SITV…KKKV) and 132–195 (VTTA…KRAV). Zn(2+) contacts are provided by cysteine 36 and cysteine 39. The span at 82–129 (EKTKKKVDLVSPQPKKEKEKENKNKNDEDKKKSEEKKKPDNNDKKPKE) shows a compositional bias: basic and acidic residues. The tract at residues 82–131 (EKTKKKVDLVSPQPKKEKEKENKNKNDEDKKKSEEKKKPDNNDKKPKETP) is disordered. Cysteine 143 and cysteine 146 together coordinate Zn(2+). A compositionally biased stretch (basic and acidic residues) spans 198–230 (VPPKKEKDKENGNENGEKKKGGGGDGGGKEKTG). The interval 198–238 (VPPKKEKDKENGNENGEKKKGGGGDGGGKEKTGNKGGGEGV) is disordered. Cysteine methyl ester is present on cysteine 280. Cysteine 280 carries the S-farnesyl cysteine lipid modification. Residues 281-283 (VVM) constitute a propeptide, removed in mature form.

This sequence belongs to the HIPP family.

Its subcellular location is the nucleus. The protein localises to the nucleolus. It is found in the cytoplasm. Heavy-metal-binding protein. Binds high amounts of zinc. May act as an upstream regulator of the salicylate-dependent pathogen response. Involved in abiotic stress responses, and seed and flower development. This chain is Heavy metal-associated isoprenylated plant protein 3, found in Arabidopsis thaliana (Mouse-ear cress).